Here is a 761-residue protein sequence, read N- to C-terminus: Wall-associated receptor kinase-like 4 (761 aa).

The signal sequence occupies residues 1–26 (MKKETQNLQCIPLVISVLSLFGVSSA). Over 27-349 (RKPPYLCNRV…EPKKPGQIKP (323 aa)) the chain is Extracellular. N-linked (GlcNAc...) asparagine glycans are attached at residues Asn64, Asn166, Asn206, Asn226, and Asn262. Positions 278–339 (CVCSYGYFSG…CVNKPGWFTC (62 aa)) are atypical EGF-like. Cystine bridges form between Cys280/Cys293, Cys316/Cys330, and Cys325/Cys339. A helical transmembrane segment spans residues 350–370 (VFQGVLIGSALLLFAFGIFGL). Over 371 to 761 (YKFIKKQRRS…VEPLVPLRTW (391 aa)) the chain is Cytoplasmic. Positions 424 to 697 (FNTNRVLGQG…REVSVELERI (274 aa)) constitute a Protein kinase domain. ATP is bound by residues 430 to 438 (LGQGGQGTV) and Lys452. At Tyr497 the chain carries Phosphotyrosine. Asp549 functions as the Proton acceptor in the catalytic mechanism. 2 positions are modified to phosphothreonine: Thr583 and Thr588. Tyr596 carries the phosphotyrosine modification. Residues 701-761 (SYKSEIHNDD…VEPLVPLRTW (61 aa)) form a disordered region. Over residues 708–732 (NDDDDDDDDDDEDDQAMELNIEETW) the composition is skewed to acidic residues.

It belongs to the protein kinase superfamily. Ser/Thr protein kinase family. In terms of tissue distribution, expressed in the whole plant. Detected in root-shoot junctions and lateral root initiation sites.

It localises to the membrane. The enzyme catalyses L-seryl-[protein] + ATP = O-phospho-L-seryl-[protein] + ADP + H(+). The catalysed reaction is L-threonyl-[protein] + ATP = O-phospho-L-threonyl-[protein] + ADP + H(+). Its function is as follows. Serine/threonine-protein kinase that may function as a signaling receptor of extracellular matrix component. Plays a role in plant mineral nutrients response. This is Wall-associated receptor kinase-like 4 (WAKL4) from Arabidopsis thaliana (Mouse-ear cress).